The sequence spans 1103 residues: A disintegrin and metalloproteinase with thrombospondin motifs 10 (1103 aa).

An N-terminal signal peptide occupies residues 1–25 (MAPACQILRWALALGLGLMFEVTHA). Residues 26-233 (FRSQDEFLSS…TERGQPGLKR (208 aa)) constitute a propeptide that is removed on maturation. Residues Asn90, Asn222, and Asn323 are each glycosylated (N-linked (GlcNAc...) asparagine). The segment at 213–233 (KPPPARPLGNETERGQPGLKR) is disordered. The Peptidase M12B domain occupies 239–457 (RYVETLVVAD…GLGLCLNNRP (219 aa)). Cystine bridges form between Cys315-Cys376, Cys351-Cys358, Cys370-Cys452, Cys409-Cys436, Cys479-Cys501, Cys490-Cys508, Cys496-Cys531, Cys521-Cys536, Cys559-Cys596, Cys563-Cys601, and Cys574-Cys586. Residue His392 participates in Zn(2+) binding. Glu393 is a catalytic residue. Residues His396 and His402 each contribute to the Zn(2+) site. A Disintegrin domain is found at 460-546 (QDFVYPTVAP…VPFGSRPEGV (87 aa)). A TSP type-1 1 domain is found at 547 to 602 (DGAWGPWTPWGDCSRTCGGGVSSSSRHCDSPRPTIGGKYCLGERRRHRSCNTDDCP). Positions 706–828 (ETIEGVFSPA…IARDSLPPYS (123 aa)) are spacer. Asn740 and Asn795 each carry an N-linked (GlcNAc...) asparagine glycan. TSP type-1 domains follow at residues 825–883 (PPYS…NTEP), 884–945 (CPPD…PTCP), 947–1001 (EWAA…NLRR), and 1003–1058 (PPAR…AKCD). A glycan (N-linked (GlcNAc...) asparagine) is linked at Asn892. One can recognise a PLAC domain in the interval 1065 to 1103 (GPEECKDVNKVAYCPLVLKFQFCSRAYFRQMCCKTCHGH).

As to quaternary structure, interacts with FBN1; this interaction promotes microfibrils assembly. Requires Zn(2+) as cofactor. In terms of processing, glycosylated. Can be O-fucosylated by POFUT2 on a serine or a threonine residue found within the consensus sequence C1-X(2)-(S/T)-C2-G of the TSP type-1 repeat domains where C1 and C2 are the first and second cysteine residue of the repeat, respectively. Fucosylated repeats can then be further glycosylated by the addition of a beta-1,3-glucose residue by the glucosyltransferase, B3GALTL. Fucosylation mediates the efficient secretion of ADAMTS family members. Can also be C-glycosylated with one or two mannose molecules on tryptophan residues within the consensus sequence W-X-X-W of the TPRs, and N-glycosylated. These other glycosylations can also facilitate secretion. As to expression, widely expressed in adult tissues.

It is found in the secreted. The protein resides in the extracellular space. The protein localises to the extracellular matrix. Functionally, metalloprotease that participate in microfibrils assembly. Microfibrils are extracellular matrix components occurring independently or along with elastin in the formation of elastic tissues. The polypeptide is A disintegrin and metalloproteinase with thrombospondin motifs 10 (ADAMTS10) (Homo sapiens (Human)).